The chain runs to 216 residues: MOB kinase activator 1A (216 aa).

N-acetylserine is present on Ser-2. Phosphothreonine is present on residues Thr-12 and Thr-35. Thr-74 carries the post-translational modification Phosphothreonine; by STK3/MST2. Cys-79, Cys-84, His-161, and His-166 together coordinate Zn(2+). Thr-181 carries the phosphothreonine modification.

It belongs to the MOB1/phocein family. In terms of assembly, binds STK38 and STK38L. Interacts with LATS1 and LATS2. Forms a tripartite complex with STK38 and STK3/MST2. Post-translationally, phosphorylated by STK3/MST2 and STK4/MST1 and this phosphorylation enhances its binding to LATS1. As to expression, adrenal gland, bone marrow, brain, placenta, prostate, salivary gland, skeletal muscle, testis, thymus, thyroid gland, heart, spinal cord, fetal brain and fetal liver.

Functionally, activator of LATS1/2 in the Hippo signaling pathway which plays a pivotal role in organ size control and tumor suppression by restricting proliferation and promoting apoptosis. The core of this pathway is composed of a kinase cascade wherein STK3/MST2 and STK4/MST1, in complex with its regulatory protein SAV1, phosphorylates and activates LATS1/2 in complex with its regulatory protein MOB1, which in turn phosphorylates and inactivates YAP1 oncoprotein and WWTR1/TAZ. Phosphorylation of YAP1 by LATS1/2 inhibits its translocation into the nucleus to regulate cellular genes important for cell proliferation, cell death, and cell migration. Stimulates the kinase activity of STK38 and STK38L. Acts cooperatively with STK3/MST2 to activate STK38. The sequence is that of MOB kinase activator 1A from Homo sapiens (Human).